Here is a 253-residue protein sequence, read N- to C-terminus: Small ribosomal subunit protein uS2 (253 aa).

Positions 226-253 (QGADNADVEKELSESVEENSAEEVDDAE) are disordered. Residues 239–253 (ESVEENSAEEVDDAE) are compositionally biased toward acidic residues.

This sequence belongs to the universal ribosomal protein uS2 family.

This is Small ribosomal subunit protein uS2 from Lactobacillus delbrueckii subsp. bulgaricus (strain ATCC 11842 / DSM 20081 / BCRC 10696 / JCM 1002 / NBRC 13953 / NCIMB 11778 / NCTC 12712 / WDCM 00102 / Lb 14).